The following is a 335-amino-acid chain: Cathepsin B-like cysteine proteinase 4 (335 aa).

An N-terminal signal peptide occupies residues 1–15 (MKYLILAALVAVTAG). Positions 16–80 (LVIPLVPKTQ…VVKHDINEDT (65 aa)) are excised as a propeptide. Disulfide bonds link Cys94–Cys123, Cys106–Cys150, Cys142–Cys209, Cys143–Cys146, Cys179–Cys213, and Cys187–Cys199. Cys109 is a catalytic residue. A glycan (N-linked (GlcNAc...) asparagine) is linked at Asn193. Catalysis depends on residues His281 and Asn301.

The protein belongs to the peptidase C1 family.

It is found in the secreted. Functionally, thiol protease which shows activity against the fluorogenic substrate z-Arg-Arg-AMC. The protein is Cathepsin B-like cysteine proteinase 4 (cpr-4) of Caenorhabditis elegans.